Here is a 374-residue protein sequence, read N- to C-terminus: Probable dual-specificity RNA methyltransferase RlmN 3 (374 aa).

E96 functions as the Proton acceptor in the catalytic mechanism. The Radical SAM core domain maps to 110–350 (DHSRKTICIS…VTLRREKGHD (241 aa)). C117 and C355 are oxidised to a cystine. [4Fe-4S] cluster is bound by residues C124, C128, and C131. S-adenosyl-L-methionine-binding positions include 181 to 182 (GE), S213, 236 to 238 (SLH), and N312. The S-methylcysteine intermediate role is filled by C355.

Belongs to the radical SAM superfamily. RlmN family. Requires [4Fe-4S] cluster as cofactor.

The protein resides in the cytoplasm. The catalysed reaction is adenosine(2503) in 23S rRNA + 2 reduced [2Fe-2S]-[ferredoxin] + 2 S-adenosyl-L-methionine = 2-methyladenosine(2503) in 23S rRNA + 5'-deoxyadenosine + L-methionine + 2 oxidized [2Fe-2S]-[ferredoxin] + S-adenosyl-L-homocysteine. It catalyses the reaction adenosine(37) in tRNA + 2 reduced [2Fe-2S]-[ferredoxin] + 2 S-adenosyl-L-methionine = 2-methyladenosine(37) in tRNA + 5'-deoxyadenosine + L-methionine + 2 oxidized [2Fe-2S]-[ferredoxin] + S-adenosyl-L-homocysteine. Functionally, specifically methylates position 2 of adenine 2503 in 23S rRNA and position 2 of adenine 37 in tRNAs. This is Probable dual-specificity RNA methyltransferase RlmN 3 from Opitutus terrae (strain DSM 11246 / JCM 15787 / PB90-1).